Reading from the N-terminus, the 203-residue chain is MKKNRISKNWINKQKRDIYVRQSQVDGYRARSAYKLIEIDEKFKIFKNGISVIDLGASPGSWSQYISRTVKSGRLVSIDLKGMEEIENTIQIKGDFTDLESQEKIKALFKSKVDVVVSDMAVNTTGIKDIDAIYTGELAMEAMNFSKEMLVKEGRFVSKIFLGSSFNEIVALGKKLFKEVKVFKPKSSRKESKESFIICKILR.

S-adenosyl-L-methionine is bound by residues Gly-60, Trp-62, Asp-79, Asp-95, and Asp-119. Catalysis depends on Lys-159, which acts as the Proton acceptor.

The protein belongs to the class I-like SAM-binding methyltransferase superfamily. RNA methyltransferase RlmE family.

It is found in the cytoplasm. It catalyses the reaction uridine(2552) in 23S rRNA + S-adenosyl-L-methionine = 2'-O-methyluridine(2552) in 23S rRNA + S-adenosyl-L-homocysteine + H(+). Specifically methylates the uridine in position 2552 of 23S rRNA at the 2'-O position of the ribose in the fully assembled 50S ribosomal subunit. The sequence is that of Ribosomal RNA large subunit methyltransferase E from Pelagibacter ubique (strain HTCC1062).